Consider the following 274-residue polypeptide: tRNA-cytidine(32) 2-sulfurtransferase (274 aa).

The PP-loop motif signature appears at 40–45; sequence SGGKDS. [4Fe-4S] cluster contacts are provided by C115, C118, and C206.

It belongs to the TtcA family. Homodimer. The cofactor is Mg(2+). [4Fe-4S] cluster serves as cofactor.

Its subcellular location is the cytoplasm. It catalyses the reaction cytidine(32) in tRNA + S-sulfanyl-L-cysteinyl-[cysteine desulfurase] + AH2 + ATP = 2-thiocytidine(32) in tRNA + L-cysteinyl-[cysteine desulfurase] + A + AMP + diphosphate + H(+). It functions in the pathway tRNA modification. Catalyzes the ATP-dependent 2-thiolation of cytidine in position 32 of tRNA, to form 2-thiocytidine (s(2)C32). The sulfur atoms are provided by the cysteine/cysteine desulfurase (IscS) system. The sequence is that of tRNA-cytidine(32) 2-sulfurtransferase from Pseudomonas putida (strain ATCC 47054 / DSM 6125 / CFBP 8728 / NCIMB 11950 / KT2440).